The sequence spans 217 residues: Somatotropin (217 aa).

A signal peptide spans 1-27; sequence MMAAGPRASLLLAFALLCLPWTQEVGA. Histidine 46 contacts Zn(2+). A disulfide bond links cysteine 79 and cysteine 190. Serine 132 carries the post-translational modification Phosphoserine. Zn(2+) is bound at residue glutamate 199. A disulfide bond links cysteine 207 and cysteine 215.

This sequence belongs to the somatotropin/prolactin family.

It is found in the secreted. In terms of biological role, plays an important role in growth control. Its major role in stimulating body growth is to stimulate the liver and other tissues to secrete IGF1. It stimulates both the differentiation and proliferation of myoblasts. It also stimulates amino acid uptake and protein synthesis in muscle and other tissues. This is Somatotropin (GH1) from Cervus elaphus (Red deer).